We begin with the raw amino-acid sequence, 273 residues long: Chlorophyll a-b binding protein 8, chloroplastic (273 aa).

Residues methionine 1–threonine 32 constitute a chloroplast transit peptide. Arginine 33 is subject to N2-acetylarginine. Tryptophan 56 lines the chlorophyll b pocket. Chlorophyll a is bound by residues phenylalanine 76, serine 82, and glutamate 100. Arginine 105 serves as a coordination point for chlorophyll b. Residues phenylalanine 106–isoleucine 126 form a helical membrane-spanning segment. Residues isoleucine 140, glutamate 167, and arginine 170 each contribute to the chlorophyll b site. The chlorophyll a site is built by lysine 224, glutamate 225, asparagine 228, arginine 230, glutamine 242, and histidine 257. The chain crosses the membrane as a helical span at residues leucine 231 to tyrosine 251.

The protein belongs to the light-harvesting chlorophyll a/b-binding (LHC) protein family. As to quaternary structure, the LHC complex consists of chlorophyll a-b binding proteins. The cofactor is Binds at least 14 chlorophylls (8 Chl-a and 6 Chl-b) and carotenoids such as lutein and neoxanthin.. In terms of processing, photoregulated by reversible phosphorylation of its threonine residues.

It is found in the plastid. The protein resides in the chloroplast thylakoid membrane. The light-harvesting complex (LHC) functions as a light receptor, it captures and delivers excitation energy to photosystems with which it is closely associated. The sequence is that of Chlorophyll a-b binding protein 8, chloroplastic (CAB8) from Solanum lycopersicum (Tomato).